The following is a 235-amino-acid chain: Ribosomal RNA small subunit methyltransferase G (235 aa).

S-adenosyl-L-methionine contacts are provided by residues glycine 98, methionine 103, 149–150, and arginine 164; that span reads VE.

The protein belongs to the methyltransferase superfamily. RNA methyltransferase RsmG family.

Its subcellular location is the cytoplasm. The catalysed reaction is guanosine(527) in 16S rRNA + S-adenosyl-L-methionine = N(7)-methylguanosine(527) in 16S rRNA + S-adenosyl-L-homocysteine. Specifically methylates the N7 position of guanine in position 527 of 16S rRNA. In Cupriavidus pinatubonensis (strain JMP 134 / LMG 1197) (Cupriavidus necator (strain JMP 134)), this protein is Ribosomal RNA small subunit methyltransferase G.